The following is a 546-amino-acid chain: Chaperonin GroEL (546 aa).

ATP-binding positions include Thr-30 to Pro-33, Lys-51, Asp-87 to Thr-91, Gly-415, Asn-479 to Ala-481, and Asp-495.

The protein belongs to the chaperonin (HSP60) family. As to quaternary structure, forms a cylinder of 14 subunits composed of two heptameric rings stacked back-to-back. Interacts with the co-chaperonin GroES.

It localises to the cytoplasm. The catalysed reaction is ATP + H2O + a folded polypeptide = ADP + phosphate + an unfolded polypeptide.. Together with its co-chaperonin GroES, plays an essential role in assisting protein folding. The GroEL-GroES system forms a nano-cage that allows encapsulation of the non-native substrate proteins and provides a physical environment optimized to promote and accelerate protein folding. The chain is Chaperonin GroEL from Bordetella avium (strain 197N).